The sequence spans 304 residues: Probable UDP-3-O-acylglucosamine N-acyltransferase 2, mitochondrial (304 aa).

Residues 1–47 constitute a mitochondrion transit peptide; that stretch reads MAATLWRLYSKSICNSLQGIILNKPFIQKQLLLSSRTRSLSFSSDSQ. 159-161 is a binding site for UDP-N-acetyl-alpha-D-glucosamine; sequence FGF. Residues aspartate 209 and glutamine 213 each contribute to the hexadecanoate site. Histidine 216 (proton acceptor) is an active-site residue. UDP-N-acetyl-alpha-D-glucosamine contacts are provided by asparagine 217, serine 235, and histidine 253.

The protein belongs to the transferase hexapeptide repeat family. LpxD subfamily. Homotrimer.

It localises to the mitochondrion. The enzyme catalyses a UDP-3-O-[(3R)-3-hydroxyacyl]-alpha-D-glucosamine + a (3R)-hydroxyacyl-[ACP] = a UDP-2-N,3-O-bis[(3R)-3-hydroxyacyl]-alpha-D-glucosamine + holo-[ACP] + H(+). Its pathway is glycolipid biosynthesis; lipid IV(A) biosynthesis; lipid IV(A) from (3R)-3-hydroxytetradecanoyl-[acyl-carrier-protein] and UDP-N-acetyl-alpha-D-glucosamine: step 3/6. Functionally, involved in the biosynthesis of lipid A, a phosphorylated glycolipid that in bacteria anchors the lipopolysaccharide to the outer membrane of the cell. Lipid A-like molecules in plants may serve as structural components of the outer membranes of mitochondria and/or chloroplasts, or may be involved in signal transduction or plant defense responses. The sequence is that of Probable UDP-3-O-acylglucosamine N-acyltransferase 2, mitochondrial (LPXD2) from Arabidopsis thaliana (Mouse-ear cress).